The primary structure comprises 282 residues: Large ribosomal subunit protein uL2 (282 aa).

The tract at residues 223 to 282 (TVRGSVMNPNDHPHGGGEGRAPIGRKSPVTPWGKKALGVKTRNTKKTSEKLIVRKRSNKK) is disordered.

The protein belongs to the universal ribosomal protein uL2 family. In terms of assembly, part of the 50S ribosomal subunit. Forms a bridge to the 30S subunit in the 70S ribosome.

One of the primary rRNA binding proteins. Required for association of the 30S and 50S subunits to form the 70S ribosome, for tRNA binding and peptide bond formation. It has been suggested to have peptidyltransferase activity; this is somewhat controversial. Makes several contacts with the 16S rRNA in the 70S ribosome. The polypeptide is Large ribosomal subunit protein uL2 (Mycoplasma mycoides subsp. mycoides SC (strain CCUG 32753 / NCTC 10114 / PG1)).